We begin with the raw amino-acid sequence, 392 residues long: ATP-dependent RNA helicase eIF4A (392 aa).

The Q motif signature appears at 19 to 47 (DTFDDMNLKPELLRGIYAYGFERPSAIQQ). The region spanning 50 to 220 (IMPILGERDV…TKFMRDPIRI (171 aa)) is the Helicase ATP-binding domain. 63-70 (AQSGTGKT) lines the ATP pocket. A Phosphoserine modification is found at S65. The DEAD box signature appears at 168-171 (DEAD). Residues 231-392 (GIKQFYVAVE…EMPMNIADLI (162 aa)) form the Helicase C-terminal domain.

This sequence belongs to the DEAD box helicase family. eIF4A subfamily. In terms of assembly, component of the eIF4F complex, which composition varies with external and internal environmental conditions. It is composed of at least eIF4A, eIF4E and eIF4G.

It is found in the cytoplasm. It catalyses the reaction ATP + H2O = ADP + phosphate + H(+). In terms of biological role, ATP-dependent RNA helicase which is a subunit of the eIF4F complex involved in cap recognition and is required for mRNA binding to ribosome. In the current model of translation initiation, eIF4A unwinds RNA secondary structures in the 5'-UTR of mRNAs which is necessary to allow efficient binding of the small ribosomal subunit, and subsequent scanning for the initiator codon. The polypeptide is ATP-dependent RNA helicase eIF4A (tif1) (Schizosaccharomyces pombe (strain 972 / ATCC 24843) (Fission yeast)).